A 286-amino-acid chain; its full sequence is Bifunctional protein FolD (286 aa).

NADP(+) is bound by residues 164–166 (GAS), isoleucine 189, and isoleucine 230.

The protein belongs to the tetrahydrofolate dehydrogenase/cyclohydrolase family. In terms of assembly, homodimer.

It carries out the reaction (6R)-5,10-methylene-5,6,7,8-tetrahydrofolate + NADP(+) = (6R)-5,10-methenyltetrahydrofolate + NADPH. The catalysed reaction is (6R)-5,10-methenyltetrahydrofolate + H2O = (6R)-10-formyltetrahydrofolate + H(+). It participates in one-carbon metabolism; tetrahydrofolate interconversion. Catalyzes the oxidation of 5,10-methylenetetrahydrofolate to 5,10-methenyltetrahydrofolate and then the hydrolysis of 5,10-methenyltetrahydrofolate to 10-formyltetrahydrofolate. This is Bifunctional protein FolD from Wolinella succinogenes (strain ATCC 29543 / DSM 1740 / CCUG 13145 / JCM 31913 / LMG 7466 / NCTC 11488 / FDC 602W) (Vibrio succinogenes).